The primary structure comprises 264 residues: S-adenosylmethionine decarboxylase proenzyme (264 aa).

The Schiff-base intermediate with substrate; via pyruvic acid role is filled by Ser-112. Ser-112 carries the post-translational modification Pyruvic acid (Ser); by autocatalysis. His-117 functions as the Proton acceptor; for processing activity in the catalytic mechanism. The active-site Proton donor; for catalytic activity is Cys-140.

The protein belongs to the prokaryotic AdoMetDC family. Type 2 subfamily. As to quaternary structure, heterooctamer of four alpha and four beta chains arranged as a tetramer of alpha/beta heterodimers. Pyruvate is required as a cofactor. Is synthesized initially as an inactive proenzyme. Formation of the active enzyme involves a self-maturation process in which the active site pyruvoyl group is generated from an internal serine residue via an autocatalytic post-translational modification. Two non-identical subunits are generated from the proenzyme in this reaction, and the pyruvate is formed at the N-terminus of the alpha chain, which is derived from the carboxyl end of the proenzyme. The post-translation cleavage follows an unusual pathway, termed non-hydrolytic serinolysis, in which the side chain hydroxyl group of the serine supplies its oxygen atom to form the C-terminus of the beta chain, while the remainder of the serine residue undergoes an oxidative deamination to produce ammonia and the pyruvoyl group blocking the N-terminus of the alpha chain.

The catalysed reaction is S-adenosyl-L-methionine + H(+) = S-adenosyl 3-(methylsulfanyl)propylamine + CO2. The protein operates within amine and polyamine biosynthesis; S-adenosylmethioninamine biosynthesis; S-adenosylmethioninamine from S-adenosyl-L-methionine: step 1/1. In terms of biological role, catalyzes the decarboxylation of S-adenosylmethionine to S-adenosylmethioninamine (dcAdoMet), the propylamine donor required for the synthesis of the polyamines spermine and spermidine from the diamine putrescine. This is S-adenosylmethionine decarboxylase proenzyme from Cronobacter sakazakii (strain ATCC BAA-894) (Enterobacter sakazakii).